The following is a 454-amino-acid chain: Butyrophilin-like protein 2 (454 aa).

The Cytoplasmic portion of the chain corresponds to M1 to R6. Residues Y7–I23 form a helical; Signal-anchor for type II membrane protein membrane-spanning segment. Over K24 to W454 the chain is Extracellular. Ig-like V-type domains lie at D27 to Q140, P148 to A234, A244 to D355, and P365 to S452. 4 cysteine pairs are disulfide-bonded: C50–C124, C164–C218, C267–C341, and C381–C435. 4 N-linked (GlcNAc...) asparagine glycosylation sites follow: N210, N296, N427, and N432.

This sequence belongs to the immunoglobulin superfamily. BTN/MOG family. Highly expressed in intestine and at reduced levels in lung and stomach. Also expressed in thymus, spleen, lymph nodes, T-cells, B-cells, and macrophages.

Its subcellular location is the membrane. In terms of biological role, negative regulator of T-cell proliferation. The sequence is that of Butyrophilin-like protein 2 from Mus musculus (Mouse).